A 600-amino-acid chain; its full sequence is Pentatricopeptide repeat-containing protein At3g29230 (600 aa).

13 PPR repeats span residues 50 to 80, 81 to 115, 116 to 150, 151 to 183, 184 to 218, 219 to 245, 246 to 276, 279 to 313, 314 to 348, 349 to 379, 380 to 414, 415 to 445, and 451 to 481; these read DLHI…VQEP, NVHL…GLFA, DNFT…GLSS, DIYV…MSER, DTVS…DLIS, WNTM…MPER, NTVS…MPLP, NVVT…GLKF, DAAA…NLGS, NAYV…IPKK, DLVS…GIRP, DKVT…MEKV, and QVEH…MPME. The interval 486–561 is type E motif; the sequence is IWGALLGACR…PSGASSVELE (76 aa). Residues 562-592 form a type E(+) motif region; it reads DGIHEFTVFDKSHPKSDQIYQMLGSLIEPPD.

This sequence belongs to the PPR family. PCMP-E subfamily.

This is Pentatricopeptide repeat-containing protein At3g29230 (PCMP-E27) from Arabidopsis thaliana (Mouse-ear cress).